A 443-amino-acid polypeptide reads, in one-letter code: Putative rhamnogalacturonase D (443 aa).

Positions 1 to 16 (MLVTSLIALLPAIAAA) are cleaved as a signal peptide. Cys-37 and Cys-63 form a disulfide bridge. Residues Asn-47, Asn-103, Asn-124, and Asn-152 are each glycosylated (N-linked (GlcNAc...) asparagine). Asp-215 serves as the catalytic Proton donor. The cysteines at positions 217 and 234 are disulfide-linked. Residues Asn-235, Asn-250, Asn-263, Asn-276, and Asn-281 are each glycosylated (N-linked (GlcNAc...) asparagine). An intrachain disulfide couples Cys-338 to Cys-344. Asn-346 carries N-linked (GlcNAc...) asparagine glycosylation. A disulfide bridge links Cys-366 with Cys-375. N-linked (GlcNAc...) asparagine glycosylation occurs at Asn-380.

This sequence belongs to the glycosyl hydrolase 28 family.

Its subcellular location is the secreted. In terms of biological role, pectinolytic enzymes consist of four classes of enzymes: pectine lyase, polygalacturonase, pectin methylesterase and rhamnogalacturonase. Hydrolyzes alpha-D-galacturonopyranosyl-(1,2)-alpha-L-rhamnopyranosyl linkages in the backbone of the hairy regions of pectins. The polypeptide is Putative rhamnogalacturonase D (rhgD) (Aspergillus niger (strain ATCC MYA-4892 / CBS 513.88 / FGSC A1513)).